The primary structure comprises 676 residues: Palmitoyl-CoA ligase FUM16 (676 aa).

AMP is bound at residue 245–256 (IMYTSGSTGLPN). The AMP-binding stretch occupies residues 552-655 (KLESIYRTSQ…SGLVTPTMKL (104 aa)).

It belongs to the ATP-dependent AMP-binding enzyme family.

Its subcellular location is the endoplasmic reticulum. Its pathway is mycotoxin biosynthesis. In terms of biological role, palmitoyl-CoA ligase; part of the gene cluster that mediates the biosynthesis of fumonisins B1 (FB1), B2 (FB2), B3 (FB3), and B4 (FB4), which are carcinogenic mycotoxins. Plays a role in the synthesis of ceramide and is involved in self-protection from fumonisin B1 toxicity. The biosynthesis starts with the FUM1-catalyzed carbon chain assembly from one molecule of acetyl-CoA, eight molecules of malonyl-CoA, and two molecules of methionine (in S-adenosyl form). The C18 polyketide chain is released from the enzyme by a nucleophilic attack of a carbanion, which is derived from R-carbon of alanine by decarboxylation, on the carbonyl carbon of polyketide acyl chain. This step is catalyzed by the pyridoxal 5'-phosphate-dependent aminoacyl transferase FUM8. The resultant 3-keto intermediate is then stereospecifically reduced to a 3-hydroxyl product by reductase FUM13. Subsequent oxidations at C-10 by the cytochrome P450 monooxygenase FUM2, C-14 and C-15 by FUM6, FUM12 or FUM15, tricarballylic esterification of the hydroxyl groups on C-14 and C-15 by acyltransferase FUM14, and C-5 hydroxylation by 2-keto-glutarate-dependent dioxygenase FUM3 furnish the biosynthesis of fumonisins. The tricarballylic moieties are most likely derived from the citric acid cycle, and their addition to the carbon backbone may involve FUM7, FUM10, FUM11 and FUM14. The sequence is that of Palmitoyl-CoA ligase FUM16 from Gibberella moniliformis (strain M3125 / FGSC 7600) (Maize ear and stalk rot fungus).